The following is a 389-amino-acid chain: Succinate--CoA ligase [ADP-forming] subunit beta (389 aa).

The 228-residue stretch at 9–236 (RDMFEAHGVP…KDAADPLEAK (228 aa)) folds into the ATP-grasp domain. ATP contacts are provided by residues Lys45, 52-54 (GRG), Ala94, and Glu99. Mg(2+)-binding residues include Asn191 and Asp205. Substrate is bound by residues Asn256 and 318–320 (GIT).

Belongs to the succinate/malate CoA ligase beta subunit family. As to quaternary structure, heterotetramer of two alpha and two beta subunits. The cofactor is Mg(2+).

It carries out the reaction succinate + ATP + CoA = succinyl-CoA + ADP + phosphate. It catalyses the reaction GTP + succinate + CoA = succinyl-CoA + GDP + phosphate. It participates in carbohydrate metabolism; tricarboxylic acid cycle; succinate from succinyl-CoA (ligase route): step 1/1. Functionally, succinyl-CoA synthetase functions in the citric acid cycle (TCA), coupling the hydrolysis of succinyl-CoA to the synthesis of either ATP or GTP and thus represents the only step of substrate-level phosphorylation in the TCA. The beta subunit provides nucleotide specificity of the enzyme and binds the substrate succinate, while the binding sites for coenzyme A and phosphate are found in the alpha subunit. This chain is Succinate--CoA ligase [ADP-forming] subunit beta, found in Paenarthrobacter aurescens (strain TC1).